The chain runs to 341 residues: Protein pelota homolog (341 aa).

This sequence belongs to the eukaryotic release factor 1 family. Pelota subfamily. Monomer. A divalent metal cation serves as cofactor.

It is found in the cytoplasm. Its function is as follows. May function in recognizing stalled ribosomes, interact with stem-loop structures in stalled mRNA molecules, and effect endonucleolytic cleavage of the mRNA. May play a role in the release non-functional ribosomes and degradation of damaged mRNAs. Has endoribonuclease activity. The polypeptide is Protein pelota homolog (Sulfurisphaera tokodaii (strain DSM 16993 / JCM 10545 / NBRC 100140 / 7) (Sulfolobus tokodaii)).